Here is a 203-residue protein sequence, read N- to C-terminus: Na(+)-translocating NADH-quinone reductase subunit E (203 aa).

Helical transmembrane passes span 11–31 (SIFIENMALSFFLGMCTFLAV), 35–55 (ISTAIGLGTAVIVVQTLTVPL), 82–102 (FLGLIAYIGVIAAVVQILEMF), 115–135 (GIFLPLITVNCAILAGSLFMV), 145–165 (MVYGVGSGVGWALAIAVMAGV), and 181–201 (LGITFITAGLMAIGFMSFSGI).

The protein belongs to the NqrDE/RnfAE family. As to quaternary structure, composed of six subunits; NqrA, NqrB, NqrC, NqrD, NqrE and NqrF.

It localises to the cell inner membrane. The catalysed reaction is a ubiquinone + n Na(+)(in) + NADH + H(+) = a ubiquinol + n Na(+)(out) + NAD(+). NQR complex catalyzes the reduction of ubiquinone-1 to ubiquinol by two successive reactions, coupled with the transport of Na(+) ions from the cytoplasm to the periplasm. NqrA to NqrE are probably involved in the second step, the conversion of ubisemiquinone to ubiquinol. This chain is Na(+)-translocating NADH-quinone reductase subunit E, found in Dichelobacter nodosus (strain VCS1703A).